The following is a 527-amino-acid chain: GMP synthase [glutamine-hydrolyzing] (527 aa).

The Glutamine amidotransferase type-1 domain maps to 4–202 (KILILDFGSQ…VLKICGAKPD (199 aa)). Cys81 functions as the Nucleophile in the catalytic mechanism. Catalysis depends on residues His176 and Glu178. Residues 203 to 395 (WEMGNYIDEA…LGLPPSMVYR (193 aa)) form the GMPS ATP-PPase domain. 230–236 (SGGVDSS) lines the ATP pocket.

Homodimer.

The catalysed reaction is XMP + L-glutamine + ATP + H2O = GMP + L-glutamate + AMP + diphosphate + 2 H(+). Its pathway is purine metabolism; GMP biosynthesis; GMP from XMP (L-Gln route): step 1/1. Catalyzes the synthesis of GMP from XMP. This chain is GMP synthase [glutamine-hydrolyzing], found in Paraburkholderia phymatum (strain DSM 17167 / CIP 108236 / LMG 21445 / STM815) (Burkholderia phymatum).